We begin with the raw amino-acid sequence, 240 residues long: 1-(5-phosphoribosyl)-5-[(5-phosphoribosylamino)methylideneamino] imidazole-4-carboxamide isomerase (240 aa).

The Proton acceptor role is filled by Asp-8. Residue Asp-129 is the Proton donor of the active site.

Belongs to the HisA/HisF family.

The protein resides in the cytoplasm. The enzyme catalyses 1-(5-phospho-beta-D-ribosyl)-5-[(5-phospho-beta-D-ribosylamino)methylideneamino]imidazole-4-carboxamide = 5-[(5-phospho-1-deoxy-D-ribulos-1-ylimino)methylamino]-1-(5-phospho-beta-D-ribosyl)imidazole-4-carboxamide. It functions in the pathway amino-acid biosynthesis; L-histidine biosynthesis; L-histidine from 5-phospho-alpha-D-ribose 1-diphosphate: step 4/9. The protein is 1-(5-phosphoribosyl)-5-[(5-phosphoribosylamino)methylideneamino] imidazole-4-carboxamide isomerase of Herpetosiphon aurantiacus (strain ATCC 23779 / DSM 785 / 114-95).